A 142-amino-acid polypeptide reads, in one-letter code: Neuritin (142 aa).

A signal peptide spans 1 to 27 (MGLKLNGRYISLILAVQIAYLVQAVRA). The GPI-anchor amidated glycine moiety is linked to residue Gly116. Positions 117–142 (AAGSLLPALSVLLVSLSAALATWFSF) are cleaved as a propeptide — removed in mature form.

The protein belongs to the neuritin family. As to quaternary structure, component of the outer core of AMPAR complex. AMPAR complex consists of an inner core made of 4 pore-forming GluA/GRIA proteins (GRIA1, GRIA2, GRIA3 and GRIA4) and 4 major auxiliary subunits arranged in a twofold symmetry. One of the two pairs of distinct binding sites is occupied either by CNIH2, CNIH3 or CACNG2, CACNG3. The other harbors CACNG2, CACNG3, CACNG4, CACNG8 or GSG1L. This inner core of AMPAR complex is complemented by outer core constituents binding directly to the GluA/GRIA proteins at sites distinct from the interaction sites of the inner core constituents. Outer core constituents include at least PRRT1, PRRT2, CKAMP44/SHISA9, FRRS1L and NRN1. The proteins of the inner and outer core serve as a platform for other, more peripherally associated AMPAR constituents. Alone or in combination, these auxiliary subunits control the gating and pharmacology of the AMPAR complex and profoundly impact their biogenesis and protein processing. Expressed in the brain (at protein level).

The protein resides in the cell membrane. Its subcellular location is the synapse. In terms of biological role, promotes neurite outgrowth and especially branching of neuritic processes in primary hippocampal and cortical cells. In Mus musculus (Mouse), this protein is Neuritin (Nrn1).